The sequence spans 297 residues: Phosphoribosylaminoimidazole-succinocarboxamide synthase (297 aa).

This sequence belongs to the SAICAR synthetase family.

The catalysed reaction is 5-amino-1-(5-phospho-D-ribosyl)imidazole-4-carboxylate + L-aspartate + ATP = (2S)-2-[5-amino-1-(5-phospho-beta-D-ribosyl)imidazole-4-carboxamido]succinate + ADP + phosphate + 2 H(+). It participates in purine metabolism; IMP biosynthesis via de novo pathway; 5-amino-1-(5-phospho-D-ribosyl)imidazole-4-carboxamide from 5-amino-1-(5-phospho-D-ribosyl)imidazole-4-carboxylate: step 1/2. This chain is Phosphoribosylaminoimidazole-succinocarboxamide synthase, found in Rhodococcus erythropolis (strain PR4 / NBRC 100887).